Here is a 198-residue protein sequence, read N- to C-terminus: Recombination protein RecR (198 aa).

Residues 57-72 (CSVCGHITDQDPCYIC) form a C4-type zinc finger. Positions 80 to 175 (SVICVVQDPK…KLSRIAHGLP (96 aa)) constitute a Toprim domain.

The protein belongs to the RecR family.

Its function is as follows. May play a role in DNA repair. It seems to be involved in an RecBC-independent recombinational process of DNA repair. It may act with RecF and RecO. In Bacillus subtilis (strain 168), this protein is Recombination protein RecR.